Here is a 195-residue protein sequence, read N- to C-terminus: MKNVKFIKKSESVIGLWLPILVILILFAFLVAESVIMKDIILSNSVVALATAIMASAALVTILVSNRQVQLMARQQRLKAIEDRLEKFYIPLIKAFSSYVYTAQTEDEIETIITCRRYLAGNNLLRVLPMHFKFKADKIAGSANWTFYAKEDFEQWKEALDVLWEEFLEVLKEYYTLSGTEISLPEKPDWLIGYK.

The next 2 membrane-spanning stretches (helical) occupy residues 13–32 and 42–64; these read VIGLWLPILVILILFAFLVA and LSNSVVALATAIMASAALVTILV.

Its subcellular location is the cell membrane. This is an uncharacterized protein from Archaeoglobus fulgidus (strain ATCC 49558 / DSM 4304 / JCM 9628 / NBRC 100126 / VC-16).